The following is a 176-amino-acid chain: MMAEAKLIYPRYAVVRLRGIPTTPRDIARTLDLLRLRRKFTMVVVPGSPSIMGMIQEVNDWVTWGEIEADTLAEVLKKRGRIVGDKPLTLEYLKKWGWQSFEEVALAYVAGEIERLSCGRYYAREGQRPPCIPYLKPFFRLHPPRGGLNSVKLHFAAGGDLGYRGPLINDLIRRML.

It belongs to the universal ribosomal protein uL30 family. In terms of assembly, part of the 50S ribosomal subunit.

The chain is Large ribosomal subunit protein uL30 from Pyrobaculum arsenaticum (strain DSM 13514 / JCM 11321 / PZ6).